The sequence spans 276 residues: MGIKKYNPTTNGRRNMTTNDFAEITTDRPEKSLLAPLSKKAGRNNQGKITVRHQGGGHKRQYRIIDFKRNEDGIPGRVATIEYDPNRSANIALINYVDGEKRYILAPKNLEVGMEIMSGAEADIKIGNALPLINIPVGTVVHNIELKPGRGGQLVRSAGTSAQVLGKEGKYVLVRLTSGEVRLVLSACRAAVGQVGNESHELIKIGKAGRSRWLGKRPTVRGSVMNPVDHPHGGGEGRSPIGRKSPMSPWGKPTLGFKTRKKNKASDKFIVRRRKK.

Disordered regions lie at residues 1–20 (MGIK…TTND) and 219–276 (TVRG…RRKK). Positions 7 to 20 (NPTTNGRRNMTTND) are enriched in polar residues.

Belongs to the universal ribosomal protein uL2 family. In terms of assembly, part of the 50S ribosomal subunit. Forms a bridge to the 30S subunit in the 70S ribosome.

Functionally, one of the primary rRNA binding proteins. Required for association of the 30S and 50S subunits to form the 70S ribosome, for tRNA binding and peptide bond formation. It has been suggested to have peptidyltransferase activity; this is somewhat controversial. Makes several contacts with the 16S rRNA in the 70S ribosome. The polypeptide is Large ribosomal subunit protein uL2 (Bacillus cereus (strain Q1)).